The chain runs to 356 residues: Deoxyribonuclease-2-beta (356 aa).

The N-terminal stretch at 1 to 22 (MTAQPLKAALPLLFVALSGVLG) is a signal peptide. 4 N-linked (GlcNAc...) asparagine glycosylation sites follow: N77, N98, N114, and N273.

It belongs to the DNase II family. In terms of tissue distribution, liver specific.

Its subcellular location is the lysosome. The enzyme catalyses Endonucleolytic cleavage to nucleoside 3'-phosphates and 3'-phosphooligonucleotide end-products.. Its function is as follows. Hydrolyzes DNA under acidic conditions. Does not require divalent cations for activity. Participates in the degradation of nuclear DNA during lens cell differentiation. The chain is Deoxyribonuclease-2-beta (Dnase2b) from Rattus norvegicus (Rat).